The chain runs to 387 residues: Probable WRKY transcription factor 36 (387 aa).

Residues 197–264 (CEDPSINDGC…YEGNHDHPLP (68 aa)) constitute a DNA-binding region (WRKY). Residues 322–366 (RPNYPNQLPDDYPLSSSSFSLNFSSPDPPPPSSHDHTLNFSGLRT) form a disordered region. A compositionally biased stretch (low complexity) spans 329 to 346 (LPDDYPLSSSSFSLNFSS).

The protein localises to the nucleus. Its function is as follows. Transcription factor. Interacts specifically with the W box (5'-(T)TGAC[CT]-3'), a frequently occurring elicitor-responsive cis-acting element. This Arabidopsis thaliana (Mouse-ear cress) protein is Probable WRKY transcription factor 36 (WRKY36).